Here is a 254-residue protein sequence, read N- to C-terminus: uncharacterized protein (254 aa).

The next 5 helical transmembrane spans lie at 33 to 53, 70 to 90, 92 to 112, 133 to 153, and 223 to 243; these read MLWV…LFFI, FNKL…LFKS, FALS…LNFM, FIIF…ILLI, and FLVF…PLIF.

This sequence to M.jannaschii MJ0902.

Its subcellular location is the cell membrane. This is an uncharacterized protein from Methanocaldococcus jannaschii (strain ATCC 43067 / DSM 2661 / JAL-1 / JCM 10045 / NBRC 100440) (Methanococcus jannaschii).